The chain runs to 124 residues: CBS domain-containing protein MJ0729 (124 aa).

CBS domains lie at 10-67 and 70-124; these read MNKD…IEDL and LIDE…YKNR.

Exhibits a pH-dependent oligomerization state: at pH 7, the dominant species is a dimer, where each monomer is a two-CBS domain protein, and at pH 4.5-4.8, the dominant species is a tetramer, with an oblong shape. At pH 2.5, there is formation of intermolecular hydrogen bonds, suggesting the presence of high-molecular weight species. The physiological dimeric species is thermal and chemically very stable.

The sequence is that of CBS domain-containing protein MJ0729 from Methanocaldococcus jannaschii (strain ATCC 43067 / DSM 2661 / JAL-1 / JCM 10045 / NBRC 100440) (Methanococcus jannaschii).